The primary structure comprises 475 residues: Lactate utilization protein B (475 aa).

4Fe-4S ferredoxin-type domains are found at residues 304-334 (GTEFQPVLQCIRCAACVNVCPVYRHIGGHSY) and 353-382 (YDDYKELPYASSLCAACTEACPVKIPLHEL). 7 residues coordinate [4Fe-4S] cluster: Cys-313, Cys-316, Cys-319, Cys-323, Cys-366, Cys-369, and Cys-373.

Belongs to the LutB/YkgF family.

Its function is as follows. Is involved in L-lactate degradation and allows cells to grow with lactate as the sole carbon source. Has probably a role as an electron transporter during oxidation of L-lactate. This Geobacillus sp. (strain WCH70) protein is Lactate utilization protein B.